We begin with the raw amino-acid sequence, 432 residues long: Adenylosuccinate synthetase (432 aa).

Residues 13 to 19 and 41 to 43 each bind GTP; these read GDEGKGK and GHT. Catalysis depends on Asp14, which acts as the Proton acceptor. Mg(2+)-binding residues include Asp14 and Gly41. Residues 14 to 17, 39 to 42, Thr130, Arg144, Gln225, Thr240, and Arg304 contribute to the IMP site; these read DEGK and NAGH. The active-site Proton donor is the His42. A substrate-binding site is contributed by 300–306; that stretch reads ATTGRSR. Residues Arg306, 332–334, and 415–417 each bind GTP; these read KLD and STG.

This sequence belongs to the adenylosuccinate synthetase family. Homodimer. Requires Mg(2+) as cofactor.

It is found in the cytoplasm. The enzyme catalyses IMP + L-aspartate + GTP = N(6)-(1,2-dicarboxyethyl)-AMP + GDP + phosphate + 2 H(+). It participates in purine metabolism; AMP biosynthesis via de novo pathway; AMP from IMP: step 1/2. In terms of biological role, plays an important role in the de novo pathway of purine nucleotide biosynthesis. Catalyzes the first committed step in the biosynthesis of AMP from IMP. This Marinomonas sp. (strain MWYL1) protein is Adenylosuccinate synthetase.